Here is an 874-residue protein sequence, read N- to C-terminus: Ribosome biogenesis protein ERB1 (874 aa).

The segment at 1–148 (MAKKEVSASK…DAFAAADAAT (148 aa)) is disordered. A compositionally biased stretch (basic and acidic residues) spans 27-41 (QAVEKEEAEKEKEEG). The segment covering 55–77 (PESDSDDEGAAAAEEEEEEEEQQ) has biased composition (acidic residues). Residues 78 to 89 (QDVKELDLDKGE) are compositionally biased toward basic and acidic residues. Composition is skewed to acidic residues over residues 95–104 (SDAEDFDSEE) and 128–139 (PKEDGDEQDEQD). The segment at 312 to 429 (RFVPSKHEAK…LRLVPGYQDS (118 aa)) is required for interaction with NOP7. A required for interaction with YTM1 region spans residues 429 to 465 (SVRERFERSLDLYLAPRLRKNKLNIDPESLIPELPSP). 2 WD repeats span residues 481 to 520 (GHTG…QVFK) and 529 to 569 (NGED…FEIE). Over residues 593 to 602 (KVKGEDTKGD) the composition is skewed to basic and acidic residues. The disordered stretch occupies residues 593–640 (KVKGEDTKGDLDDDEEEEEEEEDDDDDEGQGKVKAHNSTAPAKKDVAK). Acidic residues predominate over residues 603-620 (LDDDEEEEEEEEDDDDDE). 5 WD repeats span residues 658-700 (QCRR…SQSP), 703-741 (KSKG…LLKK), 744-783 (PGVR…TPYK), 787-827 (YHEK…DLMT), and 843-874 (INQI…LWTT).

It belongs to the WD repeat BOP1/ERB1 family. In terms of assembly, component of the NOP7 complex, composed of ERB1, NOP7 and YTM1. The complex is held together by ERB1, which interacts with NOP7 via its N-terminal domain and with YTM1 via a high-affinity interaction between the seven-bladed beta-propeller domains of the 2 proteins. The NOP7 complex associates with the 66S pre-ribosome.

The protein resides in the nucleus. Its subcellular location is the nucleolus. It localises to the nucleoplasm. Component of the NOP7 complex, which is required for maturation of the 25S and 5.8S ribosomal RNAs and formation of the 60S ribosome. The protein is Ribosome biogenesis protein ERB1 of Lodderomyces elongisporus (strain ATCC 11503 / CBS 2605 / JCM 1781 / NBRC 1676 / NRRL YB-4239) (Yeast).